A 335-amino-acid polypeptide reads, in one-letter code: uncharacterized protein (335 aa).

This is an uncharacterized protein from Acanthamoeba polyphaga mimivirus (APMV).